The following is a 123-amino-acid chain: MKHRIGRVEGEILRELTKILRKDIRDPRLSDITITAVECTNDLSYATIYYSLLTEDPAKEKEVAEGLDKAKGMMRHLLGQTLTVYKVPELIFKRDTSVAYGSKIDNLINQVKKQDQERENKNK.

Belongs to the RbfA family. Monomer. Binds 30S ribosomal subunits, but not 50S ribosomal subunits or 70S ribosomes.

Its subcellular location is the cytoplasm. In terms of biological role, one of several proteins that assist in the late maturation steps of the functional core of the 30S ribosomal subunit. Associates with free 30S ribosomal subunits (but not with 30S subunits that are part of 70S ribosomes or polysomes). Required for efficient processing of 16S rRNA. May interact with the 5'-terminal helix region of 16S rRNA. This Lactobacillus gasseri (strain ATCC 33323 / DSM 20243 / BCRC 14619 / CIP 102991 / JCM 1131 / KCTC 3163 / NCIMB 11718 / NCTC 13722 / AM63) protein is Ribosome-binding factor A.